The chain runs to 233 residues: Large ribosomal subunit protein uL3 (233 aa).

The interval 145–172 is disordered; that stretch reads FGSQRASHGNSRSHRVPGSIGQAQDPGR. Position 168 is an N5-methylglutamine (Gln-168).

The protein belongs to the universal ribosomal protein uL3 family. In terms of assembly, part of the 50S ribosomal subunit. Forms a cluster with proteins L14 and L19. In terms of processing, methylated by PrmB.

Functionally, one of the primary rRNA binding proteins, it binds directly near the 3'-end of the 23S rRNA, where it nucleates assembly of the 50S subunit. The chain is Large ribosomal subunit protein uL3 from Bordetella petrii (strain ATCC BAA-461 / DSM 12804 / CCUG 43448).